Here is a 413-residue protein sequence, read N- to C-terminus: uncharacterized protein (413 aa).

The N-terminal stretch at 1–22 (MKKSKASALLWLFSLVGFMLHA) is a signal peptide.

It localises to the periplasm. Functionally, may be involved in ulvan degradation. Ulvan is the main polysaccharide component of the Ulvales (green seaweed) cell wall. It is composed of disaccharide building blocks comprising 3-sulfated rhamnose (Rha3S) linked to D-glucuronic acid (GlcA), L-iduronic acid (IduA), or D-xylose (Xyl). This is an uncharacterized protein from Formosa agariphila (strain DSM 15362 / KCTC 12365 / LMG 23005 / KMM 3901 / M-2Alg 35-1).